Consider the following 275-residue polypeptide: Bis(5'-nucleosyl)-tetraphosphatase, symmetrical (275 aa).

This sequence belongs to the Ap4A hydrolase family.

The enzyme catalyses P(1),P(4)-bis(5'-adenosyl) tetraphosphate + H2O = 2 ADP + 2 H(+). In terms of biological role, hydrolyzes diadenosine 5',5'''-P1,P4-tetraphosphate to yield ADP. In Marinomonas sp. (strain MWYL1), this protein is Bis(5'-nucleosyl)-tetraphosphatase, symmetrical.